The sequence spans 287 residues: Diaminopimelate epimerase (287 aa).

Residues Asn11, Gln44, and Asn64 each contribute to the substrate site. The active-site Proton donor is the Cys73. Residues 74–75 (GN), Asn157, Asn190, and 208–209 (ER) each bind substrate. The Proton acceptor role is filled by Cys217. Residue 218-219 (GT) participates in substrate binding.

This sequence belongs to the diaminopimelate epimerase family. In terms of assembly, homodimer.

The protein localises to the cytoplasm. The enzyme catalyses (2S,6S)-2,6-diaminopimelate = meso-2,6-diaminopimelate. Its pathway is amino-acid biosynthesis; L-lysine biosynthesis via DAP pathway; DL-2,6-diaminopimelate from LL-2,6-diaminopimelate: step 1/1. Its function is as follows. Catalyzes the stereoinversion of LL-2,6-diaminopimelate (L,L-DAP) to meso-diaminopimelate (meso-DAP), a precursor of L-lysine and an essential component of the bacterial peptidoglycan. The protein is Diaminopimelate epimerase of Halorhodospira halophila (strain DSM 244 / SL1) (Ectothiorhodospira halophila (strain DSM 244 / SL1)).